A 287-amino-acid chain; its full sequence is Zinc finger protein SNAI3 (287 aa).

Residues 1 to 20 (MPRSFLVKTHSSHRVPNYGK) are SNAG domain. 4 C2H2-type zinc fingers span residues 147–169 (FECIHCHRPYHTLAGLARHQQLH), 178–200 (FTCRYCDKEYASLGALKMHIRTH), 204–226 (CICKVCGKAFSRPWLLQGHIRTH), and 232–254 (YTCSHCSRAFADRSNLRAHLQTH). The C2H2-type 5; degenerate zinc-finger motif lies at 260-282 (YRCAVCPKAFSRMSLLARHEEAG).

Belongs to the snail C2H2-type zinc-finger protein family. Highly expressed in skeletal muscle and thymus. Lower expression in heart, lung and spleen.

Its subcellular location is the nucleus. Its function is as follows. Seems to inhibit myoblast differentiation. Transcriptional repressor of E-box-dependent transactivation of downstream myogenic bHLHs genes. Binds preferentially to the canonical E-box sequences 5'-CAGGTG-3' and 5'-CACCTG-3'. This Mus musculus (Mouse) protein is Zinc finger protein SNAI3 (Snai3).